Reading from the N-terminus, the 426-residue chain is Histidine--tRNA ligase (426 aa).

It belongs to the class-II aminoacyl-tRNA synthetase family. In terms of assembly, homodimer.

Its subcellular location is the cytoplasm. The enzyme catalyses tRNA(His) + L-histidine + ATP = L-histidyl-tRNA(His) + AMP + diphosphate + H(+). In Streptococcus gordonii (strain Challis / ATCC 35105 / BCRC 15272 / CH1 / DL1 / V288), this protein is Histidine--tRNA ligase.